The following is an 884-amino-acid chain: Chitin synthase E (884 aa).

2 disordered regions span residues 1 to 58 (MGTP…PAVS) and 73 to 108 (AVFAAPPYQESEAASENTFRARSNGDKASREGSRAG). 2 stretches are compositionally biased toward polar residues: residues 37–48 (QSLLERNNSSHY) and 84–93 (EAASENTFRA). The N-linked (GlcNAc...) asparagine glycan is linked to N44. Over residues 95–105 (SNGDKASREGS) the composition is skewed to basic and acidic residues. N301 carries N-linked (GlcNAc...) asparagine glycosylation. A run of 7 helical transmembrane segments spans residues 513–532 (WLNGSFAAGLYAIMHFGRIY), 556–576 (IMTWFSLASYWLTSSVIMDLV), 597–617 (IVNNFVKYGYVWVLTLQFIMA), 635–655 (YFSLVQLYVLILSFYLVVGAF), 681–701 (GGIVLIALVSTYGIYIIASVL), 708–728 (IITSSWAYFLGMTTSINILMV), and 812–832 (VLVCLWVFSNLLVTLLITATG). N-linked (GlcNAc...) asparagine glycosylation occurs at N840. A helical membrane pass occupies residues 852–872 (VILWITAGLSLFRFIGSLWFL).

The protein belongs to the chitin synthase family. Class III subfamily.

The protein localises to the cell membrane. The enzyme catalyses [(1-&gt;4)-N-acetyl-beta-D-glucosaminyl](n) + UDP-N-acetyl-alpha-D-glucosamine = [(1-&gt;4)-N-acetyl-beta-D-glucosaminyl](n+1) + UDP + H(+). Functionally, polymerizes chitin, a structural polymer of the cell wall and septum, by transferring the sugar moiety of UDP-GlcNAc to the non-reducing end of the growing chitin polymer. Plays an important role in septal growth or maintenance. Mediates colony spore formation. ChsE and chsD seem to play a functionally redundant role in lateral cell wall chitin synthesis. Involved in resistance to echinocandins. This Aspergillus niger (strain ATCC MYA-4892 / CBS 513.88 / FGSC A1513) protein is Chitin synthase E.